The chain runs to 564 residues: Probable lysosomal cobalamin transporter (564 aa).

9 consecutive transmembrane segments (helical) span residues 8-28, 41-61, 94-114, 144-164, 188-208, 312-332, 375-395, 418-438, and 506-526; these read LIWS…STFI, VTLI…LLPV, TIVY…GIPF, YTLF…FIPT, ALTF…IIYT, LLAG…LCVT, VIFT…IAAF, LLLT…VAVI, and FFGA…LLVL.

The protein belongs to the LIMR family. LMBRD1 subfamily.

It localises to the lysosome membrane. In terms of biological role, probable lysosomal cobalamin transporter. Required to export cobalamin from lysosomes allowing its conversion to cofactors. The chain is Probable lysosomal cobalamin transporter from Aspergillus clavatus (strain ATCC 1007 / CBS 513.65 / DSM 816 / NCTC 3887 / NRRL 1 / QM 1276 / 107).